Reading from the N-terminus, the 115-residue chain is NADH-ubiquinone oxidoreductase chain 3 (115 aa).

Helical transmembrane passes span 4–24 (LTVLSVNIALSTCLITIAFWL), 55–75 (FFLVAITFLLFDLEIALLLPL), and 87–107 (MMLTAFILVSVLALGLAYEWM).

This sequence belongs to the complex I subunit 3 family. As to quaternary structure, core subunit of respiratory chain NADH dehydrogenase (Complex I) which is composed of 45 different subunits. Interacts with TMEM186. Interacts with TMEM242.

Its subcellular location is the mitochondrion inner membrane. It carries out the reaction a ubiquinone + NADH + 5 H(+)(in) = a ubiquinol + NAD(+) + 4 H(+)(out). In terms of biological role, core subunit of the mitochondrial membrane respiratory chain NADH dehydrogenase (Complex I) which catalyzes electron transfer from NADH through the respiratory chain, using ubiquinone as an electron acceptor. Essential for the catalytic activity of complex I. The polypeptide is NADH-ubiquinone oxidoreductase chain 3 (Peromyscus slevini (Slevin's mouse)).